A 323-amino-acid chain; its full sequence is MKNIAIIMGGYSSEYKISLISGNVVYQYLDKTKYNGFRIHIFKEKWVYVDANDAEFPIDRNDFSVTVNGEKITFDCVFNAIHGTPGEDGLMQAYFELIGLPQSSCDYYQSALTFNKRDLLSVLKPYGIKTAISYYLNKGDEINTAEIVKKVGLPCFVKPNKAGSSFGISKVKSEAELPIAIEVAYKEDNEIIIESFLDGTEVSVGVINYKGEIKVLPITEIVSDNDFFDYEAKYEGKSQEITPARISDELTQKVGETAKRAYEVLKMKGFSRSEFIIVDNEPYMLEMNTIPGLTTESLIPQQAKAAGISLEDLFTNAIELSLA.

In terms of domain architecture, ATP-grasp spans 120-319; the sequence is LSVLKPYGIK…LEDLFTNAIE (200 aa). 148–203 is an ATP binding site; the sequence is VKKVGLPCFVKPNKAGSSFGISKVKSEAELPIAIEVAYKEDNEIIIESFLDGTEVS. Positions 274, 286, and 288 each coordinate Mg(2+).

The protein belongs to the D-alanine--D-alanine ligase family. Mg(2+) is required as a cofactor. Requires Mn(2+) as cofactor.

The protein resides in the cytoplasm. It catalyses the reaction 2 D-alanine + ATP = D-alanyl-D-alanine + ADP + phosphate + H(+). Its pathway is cell wall biogenesis; peptidoglycan biosynthesis. Functionally, cell wall formation. The sequence is that of D-alanine--D-alanine ligase from Flavobacterium johnsoniae (strain ATCC 17061 / DSM 2064 / JCM 8514 / BCRC 14874 / CCUG 350202 / NBRC 14942 / NCIMB 11054 / UW101) (Cytophaga johnsonae).